The following is a 318-amino-acid chain: NADH-ubiquinone oxidoreductase chain 1 (318 aa).

The next 8 membrane-spanning stretches (helical) occupy residues 2 to 22, 70 to 90, 100 to 120, 147 to 167, 171 to 191, 217 to 237, 254 to 276, and 294 to 314; these read FMINVLLLIIPILLAVAFLTL, MFIIAPILALTLALTMWIPLP, LGILFMLAMSSLAVYSILWSG, AIILLSVLLMSGSFTLSTLII, YLWLIFPSWPLAMMWFISTLA, AGPFALFFLAEYANIIMMNIF, LYSINFTMKTLLLTCSFLWIRAS, and LPLTLALCMWHVSLPIMLSSI.

This sequence belongs to the complex I subunit 1 family. Core subunit of respiratory chain NADH dehydrogenase (Complex I) which is composed of 45 different subunits.

It is found in the mitochondrion inner membrane. The catalysed reaction is a ubiquinone + NADH + 5 H(+)(in) = a ubiquinol + NAD(+) + 4 H(+)(out). In terms of biological role, core subunit of the mitochondrial membrane respiratory chain NADH dehydrogenase (Complex I) which catalyzes electron transfer from NADH through the respiratory chain, using ubiquinone as an electron acceptor. Essential for the catalytic activity and assembly of complex I. The polypeptide is NADH-ubiquinone oxidoreductase chain 1 (MT-ND1) (Equus asinus (Donkey)).